The chain runs to 125 residues: MPTINQLVRKPRVSEVIKSKSPALENCPQRRGVCTRVYTTTPKKPNSALRKVAKVRLTNGFEVISYIGGEGHNLQEHSVVLIRGGRVKDLPGVRYHIVRGSLDLQGVKDRKQARSKYGAKRPKAA.

Residue D89 is modified to 3-methylthioaspartic acid.

This sequence belongs to the universal ribosomal protein uS12 family. In terms of assembly, part of the 30S ribosomal subunit. Contacts proteins S8 and S17. May interact with IF1 in the 30S initiation complex.

Functionally, with S4 and S5 plays an important role in translational accuracy. In terms of biological role, interacts with and stabilizes bases of the 16S rRNA that are involved in tRNA selection in the A site and with the mRNA backbone. Located at the interface of the 30S and 50S subunits, it traverses the body of the 30S subunit contacting proteins on the other side and probably holding the rRNA structure together. The combined cluster of proteins S8, S12 and S17 appears to hold together the shoulder and platform of the 30S subunit. This Cupriavidus pinatubonensis (strain JMP 134 / LMG 1197) (Cupriavidus necator (strain JMP 134)) protein is Small ribosomal subunit protein uS12.